A 94-amino-acid chain; its full sequence is Neutrophil antibiotic peptide NP-1 (94 aa).

Residues 1–19 (MRTLTLLTALLLLALHTQA) form the signal peptide. The propeptide occupies 20 to 62 (KSPQGTAEEAPDQEQLVMEDQDISISFGGDKGTALQDADVKAG). 3 cysteine pairs are disulfide-bonded: C65-C93, C67-C82, and C72-C92. Y84 bears the Phosphotyrosine mark.

The protein belongs to the alpha-defensin family. As to expression, highest expression in bone marrow and to a much lesser extent in small intestine.

It is found in the secreted. Functionally, active in vitro against S.aureus, fungi, Gram-positive and Gram-negative bacteria and to a lesser extent against an enveloped virus. In Rattus norvegicus (Rat), this protein is Neutrophil antibiotic peptide NP-1.